We begin with the raw amino-acid sequence, 217 residues long: Claudin-9 (217 aa).

The Cytoplasmic segment spans residues 1–7; that stretch reads MASTGLE. The chain crosses the membrane as a helical span at residues 8 to 28; the sequence is LLGMTLAVLGWLGTLVSCALP. The Extracellular portion of the chain corresponds to 29–81; the sequence is LWKVTAFIGNSIVVAQVVWEGLWMSCVVQSTGQMQCKVYDSLLALPQDLQAAR. The chain crosses the membrane as a helical span at residues 82–102; sequence ALCVIALLLALLGLLVAITGA. Residues 103-116 are Cytoplasmic-facing; sequence QCTTCVEDEGAKAR. A helical membrane pass occupies residues 117–137; that stretch reads IVLTAGVILLLAGILVLIPVC. The Extracellular segment spans residues 138–159; it reads WTAHAIIQDFYNPLVAEALKRE. Residues 160–180 traverse the membrane as a helical segment; it reads LGASLYLGWAAAALLMLGGGL. Residues 181-217 are Cytoplasmic-facing; sequence LCCTCPPPQVERPRGPRLGYSIPSRSGASGLDKRDYV. Residues 194–217 are disordered; it reads RGPRLGYSIPSRSGASGLDKRDYV.

This sequence belongs to the claudin family. Interacts with CLDN1, CD81 and OCLN. As to expression, expressed in the liver, in peripheral blood mononuclear cells and hepatocarcinoma cell lines.

It is found in the cell junction. The protein localises to the tight junction. The protein resides in the cell membrane. Plays a major role in tight junction-specific obliteration of the intercellular space, through calcium-independent cell-adhesion activity. Functionally, (Microbial infection) Acts as a receptor for hepatitis C virus (HCV) entry into hepatic cells. The polypeptide is Claudin-9 (CLDN9) (Homo sapiens (Human)).